The chain runs to 250 residues: MRLLALLLMVGAAVAVPREDGRIIGGHECAAHSRPFMASLNYGYHFCGGVLINNQWVLSVAHCWYNPYAMQVMLGEHDLRKFEGTEQLMKTDTIIWHPNYDYQTLDLTSCSSSSTILWKVTHAVAPIPLPTSCPVAGTPCSVSGWGNTARDGDEVYLPTLLQCMDVPIVDEEQCMKSYPDMISPRMVCAGFMDGSRDACNGDSGSPLVCRGEVYGLVSWGQGCAQPNYPGVYVKLCEFLGWIERTLEAYP.

The N-terminal stretch at M1 to A15 is a signal peptide. Residues V16–R22 constitute a propeptide, activation peptide. Residues I23–E247 form the Peptidase S1 domain. 6 cysteine pairs are disulfide-bonded: C29–C163, C47–C63, C133–C236, C140–C209, C174–C188, and C199–C223. Active-site charge relay system residues include H62 and D106. S203 (charge relay system) is an active-site residue.

This sequence belongs to the peptidase S1 family.

Its subcellular location is the secreted. The protein localises to the extracellular space. It carries out the reaction Preferential cleavage: Arg-|-Xaa, Lys-|-Xaa.. This is Trypsin from Pleuronectes platessa (European plaice).